The chain runs to 239 residues: Pyridoxine 5'-phosphate synthase (239 aa).

N7 lines the 3-amino-2-oxopropyl phosphate pocket. Residue 9 to 10 (DH) coordinates 1-deoxy-D-xylulose 5-phosphate. Position 18 (R18) interacts with 3-amino-2-oxopropyl phosphate. The active-site Proton acceptor is the H43. Residues R45 and H50 each contribute to the 1-deoxy-D-xylulose 5-phosphate site. E70 acts as the Proton acceptor in catalysis. Position 100 (T100) interacts with 1-deoxy-D-xylulose 5-phosphate. The Proton donor role is filled by H191. 3-amino-2-oxopropyl phosphate is bound by residues G192 and 213–214 (GH).

The protein belongs to the PNP synthase family. Homooctamer; tetramer of dimers.

Its subcellular location is the cytoplasm. The catalysed reaction is 3-amino-2-oxopropyl phosphate + 1-deoxy-D-xylulose 5-phosphate = pyridoxine 5'-phosphate + phosphate + 2 H2O + H(+). It functions in the pathway cofactor biosynthesis; pyridoxine 5'-phosphate biosynthesis; pyridoxine 5'-phosphate from D-erythrose 4-phosphate: step 5/5. Its function is as follows. Catalyzes the complicated ring closure reaction between the two acyclic compounds 1-deoxy-D-xylulose-5-phosphate (DXP) and 3-amino-2-oxopropyl phosphate (1-amino-acetone-3-phosphate or AAP) to form pyridoxine 5'-phosphate (PNP) and inorganic phosphate. In Trichormus variabilis (strain ATCC 29413 / PCC 7937) (Anabaena variabilis), this protein is Pyridoxine 5'-phosphate synthase.